The primary structure comprises 580 residues: Cleavage stimulation factor subunit 2 (580 aa).

S14 carries the phosphoserine modification. In terms of domain architecture, RRM spans 16 to 94 (RSVFVGNIPY…RALRVDNAAS (79 aa)). Residues 108 to 248 (APVIESPYGE…VNGAPPMMQA (141 aa)) form an interactions with CSTF3 and SYMPK region. A Glycyl lysine isopeptide (Lys-Gly) (interchain with G-Cter in SUMO2) cross-link involves residue K189. An Omega-N-methylarginine modification is found at R308. 2 disordered regions span residues 311–331 (LPTNVPTPRGLLGDAPNDPRG) and 347–414 (LGPP…RGLD). 2 stretches are compositionally biased toward basic and acidic residues: residues 363–376 (PGHEGRGPPPHDMR) and 405–414 (RGGRDPRGLD). Residues 413–417 (LDARG) form a 1; approximate repeat. The tract at residues 413–472 (LDARGMEARAMEARGLDARGLEARAMEARAMEARAMEARAMEARAMEARAMEARGMDTRG) is 12 X 5 AA tandem repeats of M-E-A-R-[AG]. 2 consecutive repeat copies span residues 418–422 (MEARA) and 423–427 (MEARG). Residues 428 to 432 (LDARG) form a 4; approximate repeat. One copy of the 5; approximate repeat lies at 433-437 (LEARA). Repeat copies occupy residues 438–442 (MEARA), 443–447 (MEARA), 448–452 (MEARA), 453–457 (MEARA), 458–462 (MEARA), and 463–467 (MEARG). Residues 468–472 (MDTRG) form a 12; approximate repeat. Residues R471 and R478 each carry the omega-N-methylarginine modification. Residues 512 to 536 (MQGASMQGGSQPGGFSPGQSQVTPQ) are disordered. The interaction with RPO2TC1 stretch occupies residues 517 to 580 (MQGGSQPGGF…EQIQKSTGAP (64 aa)). Phosphoserine is present on residues S521 and S527.

In terms of assembly, the CSTF complex is composed of CSTF1 (50 kDa subunit), CSTF2 (64 kDa subunit) and CSTF3 (77 kDa subunit). CSTF2 directly interacts with CSTF3, SYMPK and RPO2TC1. Interacts with HSF1 in heat-stressed cells. Interacts with CPSF2, CPSF3 and FIP1L1. Interacts with DDX1. Expressed in most somatic cell types (at protein level). Highly expressed in testis, except in meiotic spermatocytes.

The protein localises to the nucleus. In terms of biological role, one of the multiple factors required for polyadenylation and 3'-end cleavage of mammalian pre-mRNAs. This subunit is directly involved in the binding to pre-mRNAs. This Mus musculus (Mouse) protein is Cleavage stimulation factor subunit 2 (Cstf2).